Reading from the N-terminus, the 443-residue chain is Amino-acid acetyltransferase (443 aa).

Residues 296-434 (EQIRRATIND…KKLMYNYQRR (139 aa)) enclose the N-acetyltransferase domain.

The protein belongs to the acetyltransferase family. ArgA subfamily. As to quaternary structure, homohexamer.

It is found in the cytoplasm. It carries out the reaction L-glutamate + acetyl-CoA = N-acetyl-L-glutamate + CoA + H(+). Its pathway is amino-acid biosynthesis; L-arginine biosynthesis; N(2)-acetyl-L-ornithine from L-glutamate: step 1/4. The sequence is that of Amino-acid acetyltransferase from Escherichia fergusonii (strain ATCC 35469 / DSM 13698 / CCUG 18766 / IAM 14443 / JCM 21226 / LMG 7866 / NBRC 102419 / NCTC 12128 / CDC 0568-73).